A 70-amino-acid chain; its full sequence is Large ribosomal subunit protein bL31 (70 aa).

C16, C18, C37, and C40 together coordinate Zn(2+). The tract at residues 48 to 70 (QRQASSGGRVDKFNKRFGALGSK) is disordered.

It belongs to the bacterial ribosomal protein bL31 family. Type A subfamily. As to quaternary structure, part of the 50S ribosomal subunit. The cofactor is Zn(2+).

In terms of biological role, binds the 23S rRNA. The protein is Large ribosomal subunit protein bL31 of Photobacterium profundum (strain SS9).